We begin with the raw amino-acid sequence, 728 residues long: Catalase-peroxidase (728 aa).

The tryptophyl-tyrosyl-methioninium (Trp-Tyr) (with M-251) cross-link spans 97–225 (WHSAGTYRIA…LAAVMMGLIY (129 aa)). Residue histidine 98 is the Proton acceptor of the active site. Positions 225 to 251 (YVNPEGVDGNPDPLRTAQDIRITFARM) form a cross-link, tryptophyl-tyrosyl-methioninium (Tyr-Met) (with W-97). Heme b is bound at residue histidine 266.

It belongs to the peroxidase family. Peroxidase/catalase subfamily. As to quaternary structure, homodimer or homotetramer. The cofactor is heme b. In terms of processing, formation of the three residue Trp-Tyr-Met cross-link is important for the catalase, but not the peroxidase activity of the enzyme.

It catalyses the reaction H2O2 + AH2 = A + 2 H2O. The enzyme catalyses 2 H2O2 = O2 + 2 H2O. Bifunctional enzyme with both catalase and broad-spectrum peroxidase activity. The chain is Catalase-peroxidase from Shewanella putrefaciens (strain CN-32 / ATCC BAA-453).